A 283-amino-acid polypeptide reads, in one-letter code: Probable endonuclease 4 (283 aa).

Residues histidine 67, histidine 107, glutamate 144, aspartate 178, histidine 181, histidine 215, aspartate 228, histidine 230, and glutamate 260 each coordinate Zn(2+).

The protein belongs to the AP endonuclease 2 family. It depends on Zn(2+) as a cofactor.

The enzyme catalyses Endonucleolytic cleavage to 5'-phosphooligonucleotide end-products.. Its function is as follows. Endonuclease IV plays a role in DNA repair. It cleaves phosphodiester bonds at apurinic or apyrimidinic (AP) sites, generating a 3'-hydroxyl group and a 5'-terminal sugar phosphate. The chain is Probable endonuclease 4 from Geobacter sp. (strain M21).